A 288-amino-acid polypeptide reads, in one-letter code: 4-diphosphocytidyl-2-C-methyl-D-erythritol kinase (288 aa).

Residue lysine 13 is part of the active site. ATP is bound at residue 96 to 106 (PIGGGIGGGSS). The active site involves aspartate 138.

The protein belongs to the GHMP kinase family. IspE subfamily.

The enzyme catalyses 4-CDP-2-C-methyl-D-erythritol + ATP = 4-CDP-2-C-methyl-D-erythritol 2-phosphate + ADP + H(+). It functions in the pathway isoprenoid biosynthesis; isopentenyl diphosphate biosynthesis via DXP pathway; isopentenyl diphosphate from 1-deoxy-D-xylulose 5-phosphate: step 3/6. Its function is as follows. Catalyzes the phosphorylation of the position 2 hydroxy group of 4-diphosphocytidyl-2C-methyl-D-erythritol. The polypeptide is 4-diphosphocytidyl-2-C-methyl-D-erythritol kinase (Aliivibrio salmonicida (strain LFI1238) (Vibrio salmonicida (strain LFI1238))).